The chain runs to 200 residues: NADH-quinone oxidoreductase subunit C (200 aa).

It belongs to the complex I 30 kDa subunit family. In terms of assembly, NDH-1 is composed of 14 different subunits. Subunits NuoB, C, D, E, F, and G constitute the peripheral sector of the complex.

The protein resides in the cell inner membrane. The enzyme catalyses a quinone + NADH + 5 H(+)(in) = a quinol + NAD(+) + 4 H(+)(out). Functionally, NDH-1 shuttles electrons from NADH, via FMN and iron-sulfur (Fe-S) centers, to quinones in the respiratory chain. The immediate electron acceptor for the enzyme in this species is believed to be ubiquinone. Couples the redox reaction to proton translocation (for every two electrons transferred, four hydrogen ions are translocated across the cytoplasmic membrane), and thus conserves the redox energy in a proton gradient. The chain is NADH-quinone oxidoreductase subunit C from Burkholderia ambifaria (strain MC40-6).